A 553-amino-acid polypeptide reads, in one-letter code: Zinc finger protein 426 (553 aa).

The region spanning 40 to 111 is the KRAB domain; it reads VSFDDVIVDF…KIVFPEWKIQ (72 aa). 11 consecutive C2H2-type zinc fingers follow at residues 222 to 244, 277 to 299, 305 to 327, 333 to 355, 361 to 383, 389 to 411, 417 to 439, 445 to 467, 473 to 495, 501 to 525, and 531 to 553; these read FECSDCGKSFMNQSHLQTHQRTH, HRCKECGKGYRYPAYLNIHMRTH, YECKECGKAFNYSNSFQIHGRTH, YVCNQCGKAFTQHSGLSIHVRSH, YACKECGKAFLTSSRLIQHIRTH, FVCVKCGKAFAISSNLNGHLKMH, CECKICGKAFGYLSCLNNHMRTH, YTCKECGKAFNYSTHLKIHMRIH, YECKQCGKAFSHSTSFQIHERTH, YECKECGKAFICPSSFRIHEISHTH, and YKCQQCGKAYSHPRSLRRHERIH.

The protein localises to the nucleus. Its function is as follows. May be involved in transcriptional regulation. In Rattus norvegicus (Rat), this protein is Zinc finger protein 426 (Znf426).